A 589-amino-acid chain; its full sequence is Probable methyltransferase PMT23 (589 aa).

The Cytoplasmic segment spans residues 1–4; that stretch reads MAIS. The chain crosses the membrane as a helical; Signal-anchor for type II membrane protein span at residues 5–25; that stretch reads VQHVVVLLLSTLLIAITFFLF. The Lumenal segment spans residues 26–589; the sequence is TSDNARFPFP…FWRPAKPELR (564 aa). Asn-70, Asn-375, and Asn-442 each carry an N-linked (GlcNAc...) asparagine glycan.

Belongs to the methyltransferase superfamily.

It is found in the golgi apparatus membrane. The sequence is that of Probable methyltransferase PMT23 from Arabidopsis thaliana (Mouse-ear cress).